The following is a 535-amino-acid chain: Peptide chain release factor 3 (535 aa).

The tr-type G domain maps to 8-278 (ARRRTFAIIS…VDQAPAPGPR (271 aa)). Residues 17–24 (SHPDAGKT), 85–89 (DTPGH), and 139–142 (NKLD) each bind GTP.

Belongs to the TRAFAC class translation factor GTPase superfamily. Classic translation factor GTPase family. PrfC subfamily.

Its subcellular location is the cytoplasm. In terms of biological role, increases the formation of ribosomal termination complexes and stimulates activities of RF-1 and RF-2. It binds guanine nucleotides and has strong preference for UGA stop codons. It may interact directly with the ribosome. The stimulation of RF-1 and RF-2 is significantly reduced by GTP and GDP, but not by GMP. This chain is Peptide chain release factor 3, found in Bordetella bronchiseptica (strain ATCC BAA-588 / NCTC 13252 / RB50) (Alcaligenes bronchisepticus).